Here is a 1042-residue protein sequence, read N- to C-terminus: Atrial natriuretic peptide-converting enzyme (1042 aa).

The tract at residues Met-1–Ala-25 is disordered. The Cytoplasmic portion of the chain corresponds to Met-1–Arg-45. Positions Asp-26–Asn-29 match the DDNN motif motif. Residues Phe-46 to Leu-66 traverse the membrane as a helical; Signal-anchor for type II membrane protein segment. Topologically, residues Ser-67–Asn-1042 are extracellular. Asn-80, Asn-104, Asn-135, and Asn-141 each carry an N-linked (GlcNAc...) asparagine glycan. One can recognise an FZ 1 domain in the interval Arg-134–Pro-259. 8 disulfides stabilise this stretch: Cys-139–Cys-199, Cys-147–Cys-192, Cys-183–Cys-223, Cys-212–Cys-256, Cys-216–Cys-240, Cys-269–Cys-282, Cys-277–Cys-295, and Cys-289–Cys-304. N-linked (GlcNAc...) asparagine glycosylation is found at Asn-231, Asn-245, and Asn-251. LDL-receptor class A domains are found at residues Leu-268 to Cys-304, Asn-305 to Cys-340, Asp-341 to Cys-377, and Ser-378 to Ser-415. A glycan (N-linked (GlcNAc...) asparagine) is linked at Asn-305. 9 disulfides stabilise this stretch: Cys-306/Cys-318, Cys-313/Cys-331, Cys-325/Cys-340, Cys-342/Cys-355, Cys-350/Cys-368, Cys-362/Cys-377, Cys-379/Cys-392, Cys-387/Cys-405, and Cys-399/Cys-414. Asn-320 carries an N-linked (GlcNAc...) asparagine glycan. Asn-376 carries an N-linked (GlcNAc...) asparagine glycan. 4 N-linked (GlcNAc...) asparagine glycosylation sites follow: Asn-413, Asn-446, Asn-451, and Asn-469. The FZ 2 domain maps to Asn-450–Pro-573. Intrachain disulfides connect Cys-455–Cys-518, Cys-463–Cys-511, Cys-502–Cys-540, Cys-529–Cys-570, Cys-533–Cys-557, Cys-580–Cys-592, Cys-587–Cys-605, Cys-599–Cys-614, Cys-616–Cys-630, Cys-624–Cys-643, Cys-637–Cys-652, Cys-655–Cys-667, Cys-662–Cys-680, and Cys-674–Cys-689. Asn-567 carries N-linked (GlcNAc...) asparagine glycosylation. LDL-receptor class A domains lie at Glu-579–Cys-614, Gly-615–Ser-653, and Phe-654–Cys-689. Asn-651 is a glycosylation site (N-linked (GlcNAc...) asparagine). The SRCR domain maps to Val-690 to Arg-801. N-linked (GlcNAc...) asparagine glycans are attached at residues Asn-697 and Asn-761. 5 disulfides stabilise this stretch: Cys-790-Cys-912, Cys-828-Cys-844, Cys-926-Cys-991, Cys-955-Cys-970, and Cys-981-Cys-1010. The region spanning Ile-802–Tyr-1035 is the Peptidase S1 domain. Catalysis depends on charge relay system residues His-843 and Asp-892. The Charge relay system role is filled by Ser-985. An N-linked (GlcNAc...) asparagine glycan is attached at Asn-1022.

This sequence belongs to the peptidase S1 family. Post-translationally, N-glycosylated; required for processing and activation. In terms of processing, activated through proteolytic processing by a trypsin-like protease; cleaved into a N-terminal propeptide and an activated corin protease fragment. Different soluble forms are produced by cleavage and autocatalytic cleavage: Atrial natriuretic peptide-converting enzyme, 180 kDa soluble fragment is produced by cleavage by ADAM10, while 160 kDa and 100 kDa soluble fragments are produced by autocatalytic cleavage. Cleavage by ADAM10 to produce soluble 180 kDa soluble fragment takes place after the transmembrane region and before FZ 1. A disulfide bond links the activated corin protease fragment and the N-terminal propeptide. The disulfide bond also links the activated corin protease fragment with soluble fragments (100 kDa, 160 kDa and 180 kDa fragments). Highly expressed in heart. Expressed in heart myocytes. Also expressed in pregnant uterus. Detected in blood, in plasma as well as in serum (at protein level).

The protein resides in the cell membrane. Its subcellular location is the secreted. With respect to regulation, inhibited in a dose-dependent manner by non-specific trypsin-like serine protease inhibitors including benzamidine. In terms of biological role, serine-type endopeptidase involved in atrial natriuretic peptide (NPPA) and brain natriuretic peptide (NPPB) processing. Converts through proteolytic cleavage the non-functional propeptides NPPA and NPPB into their active hormones, ANP and BNP(1-32) respectively, thereby regulating blood pressure in the heart and promoting natriuresis, diuresis and vasodilation. Proteolytic cleavage of pro-NPPA also plays a role in female pregnancy by promoting trophoblast invasion and spiral artery remodeling in uterus. Also acts as a regulator of sodium reabsorption in kidney. Its function is as follows. Has weaker endopeptidase activity compared to isoform 1. The sequence is that of Atrial natriuretic peptide-converting enzyme (CORIN) from Homo sapiens (Human).